Here is a 46-residue protein sequence, read N- to C-terminus: Large ribosomal subunit protein bL34 (46 aa).

Positions 25-46 are disordered; that stretch reads TASGRQVLRRRRAKGRYRLAVS. Positions 31 to 46 are enriched in basic residues; the sequence is VLRRRRAKGRYRLAVS.

This sequence belongs to the bacterial ribosomal protein bL34 family.

The chain is Large ribosomal subunit protein bL34 from Synechococcus sp. (strain JA-3-3Ab) (Cyanobacteria bacterium Yellowstone A-Prime).